The sequence spans 288 residues: Glycine--tRNA ligase alpha subunit (288 aa).

This sequence belongs to the class-II aminoacyl-tRNA synthetase family. Tetramer of two alpha and two beta subunits.

The protein localises to the cytoplasm. It carries out the reaction tRNA(Gly) + glycine + ATP = glycyl-tRNA(Gly) + AMP + diphosphate. The protein is Glycine--tRNA ligase alpha subunit of Rickettsia africae (strain ESF-5).